A 520-amino-acid polypeptide reads, in one-letter code: Nonsense-mediated mRNA decay factor SMG9 (520 aa).

Disordered regions lie at residues 1-94, 108-143, and 341-360; these read MSES…PAPL, KGPV…QRPT, and KPST…SDEG. Position 2 is an N-acetylserine (Ser-2). 5 positions are modified to phosphoserine: Ser-2, Ser-4, Ser-7, Ser-32, and Ser-53. Over residues 36–53 the composition is skewed to basic and acidic residues; it reads GRERDYIAPWERERRDAS. 2 stretches are compositionally biased toward pro residues: residues 78–94 and 122–133; these read QPPP…PAPL and TAPPPPAAPAPP. Over residues 342–357 the composition is skewed to low complexity; that stretch reads PSTPSPSHESSSSSGS. Ser-451 is modified (phosphoserine).

This sequence belongs to the SMG9 family. Self-associates to form homodimers and forms heterodimers with SMG8; these assembly forms may represent SMG1C intermediate forms. Component of the SMG1C complex composed of SMG1, SMG8 and SMG9. Interacts with DHX34; the interaction is RNA-independent. Phosphorylated by SMG1.

Involved in nonsense-mediated decay (NMD) of mRNAs containing premature stop codons. Is recruited by release factors to stalled ribosomes together with SMG1 and SMG8 (forming the SMG1C protein kinase complex) and, in the SMG1C complex, is required for the efficient association between SMG1 and SMG8. Plays a role in brain, heart, and eye development. This is Nonsense-mediated mRNA decay factor SMG9 from Homo sapiens (Human).